We begin with the raw amino-acid sequence, 468 residues long: UDP-N-acetylmuramate--L-alanine ligase (468 aa).

112–118 (GTHGKTT) is an ATP binding site.

It belongs to the MurCDEF family.

Its subcellular location is the cytoplasm. It carries out the reaction UDP-N-acetyl-alpha-D-muramate + L-alanine + ATP = UDP-N-acetyl-alpha-D-muramoyl-L-alanine + ADP + phosphate + H(+). It participates in cell wall biogenesis; peptidoglycan biosynthesis. In terms of biological role, cell wall formation. This chain is UDP-N-acetylmuramate--L-alanine ligase, found in Bordetella pertussis (strain Tohama I / ATCC BAA-589 / NCTC 13251).